The chain runs to 408 residues: (R)-2-hydroxyisocaproyl-CoA dehydratase alpha subunit (408 aa).

E55 is a substrate binding site. [4Fe-4S] cluster is bound by residues C84, C117, and C346.

This sequence belongs to the FldB/FldC dehydratase alpha/beta subunit family. In terms of assembly, part of the heterodimeric complex HadBC composed of (R)-2-hydroxyisocaproyl-CoA dehydratase alpha (HadB) and beta (HadC) subunit. The cofactor is [4Fe-4S] cluster.

The enzyme catalyses (R)-2-hydroxy-4-methylpentanoyl-CoA = 4-methylpent-2-enoyl-CoA + H2O. Activated by HadI. Its function is as follows. Involved in the reductive branch of L-leucine fermentation. Catalyzes the irreversible beta/alpha-elimination of water from (R)-2-hydroxyisocaproyl-CoA to yield isocaprenoyl-CoA. This beta/alpha-dehydration depends on the reductive formation of ketyl radicals on the substrate generated by injection of a single electron from the ATP-dependent activator protein HadI. The enzyme is specific for the R-isomer. This is (R)-2-hydroxyisocaproyl-CoA dehydratase alpha subunit from Clostridioides difficile (Peptoclostridium difficile).